We begin with the raw amino-acid sequence, 326 residues long: UDP-N-acetylglucosamine transporter (326 aa).

Helical transmembrane passes span 4–24 (NLKYLSLGILVFQTTSLVLTM), 38–58 (LSSTAVVVAEFLKIMACIFLV), 136–156 (LGVYQWLSLVILMAGVAFVQW), 174–194 (FVGLMAVLTACFSSGFAGVYF), 212–232 (LGFFGSIFGLMGVYVYDGELV), 243–263 (QLTWIVVALQALGGLVIAAVI), 269–289 (ILKGFATSLSIILSTIISYFW), and 293–313 (FVPTSVFFLGAILVIAATFLY).

Belongs to the nucleotide-sugar transporter family. SLC35A subfamily. In terms of assembly, interacts with SLC35A2; the interaction is reduced in the presence of SLC35A4. Found in a complex with SLC35A2 and SLC35A4. Interacts with MGAT4B. O-Glcnacylation regulates the stability of SLC35A3 and the specific complex formation with MGAT4B.

The protein resides in the golgi apparatus membrane. It carries out the reaction UMP(out) + UDP-N-acetyl-alpha-D-glucosamine(in) = UMP(in) + UDP-N-acetyl-alpha-D-glucosamine(out). Transports diphosphate-N-acetylglucosamine (UDP-GlcNAc) from the cytosol into the lumen of the Golgi apparatus, functioning as an antiporter that exchanges UDP-N-acetyl-alpha-D-glucosamine for UMP. May supply UDP-GlcNAc as substrate for Golgi-resident glycosyltransferases that generate highly branched, multiantennary complex N-glycans and keratan sulfate. However, the exact role of SLC35A3 still needs to be elucidated, it could be a member of a catalytically more efficient multiprotein complex rather than function independently as a single transporter. The polypeptide is UDP-N-acetylglucosamine transporter (Slc35a3) (Mus musculus (Mouse)).